A 131-amino-acid polypeptide reads, in one-letter code: Holo-[acyl-carrier-protein] synthase (131 aa).

2 residues coordinate Mg(2+): aspartate 8 and glutamate 63.

This sequence belongs to the P-Pant transferase superfamily. AcpS family. Requires Mg(2+) as cofactor.

It is found in the cytoplasm. The enzyme catalyses apo-[ACP] + CoA = holo-[ACP] + adenosine 3',5'-bisphosphate + H(+). Functionally, transfers the 4'-phosphopantetheine moiety from coenzyme A to a Ser of acyl-carrier-protein. This chain is Holo-[acyl-carrier-protein] synthase, found in Shewanella halifaxensis (strain HAW-EB4).